The sequence spans 469 residues: Neuraminidase (469 aa).

Topologically, residues 1 to 9 (MNPNQKIIT) are intravirion. Residues 10-30 (IGSVSLTIATICFLMQIAILV) traverse the membrane as a helical segment. Residues 11–33 (GSVSLTIATICFLMQIAILVTTV) are involved in apical transport and lipid raft association. The Virion surface segment spans residues 31-469 (TTVTLHFKQY…DGADINLMPI (439 aa)). The hypervariable stalk region stretch occupies residues 36–88 (HFKQYECDSPANNQVMPCEPIIIERNITEIVYLTNTTIEKEICPKLVEYRNWS). N-linked (GlcNAc...) asparagine; by host glycosylation is found at asparagine 61, asparagine 70, and asparagine 86. The tract at residues 91-469 (QCKITGFAPF…DGADINLMPI (379 aa)) is head of neuraminidase. Disulfide bonds link cysteine 92–cysteine 417, cysteine 124–cysteine 129, cysteine 183–cysteine 230, cysteine 232–cysteine 237, cysteine 278–cysteine 291, cysteine 280–cysteine 289, cysteine 318–cysteine 337, and cysteine 421–cysteine 447. Arginine 118 lines the substrate pocket. The N-linked (GlcNAc...) asparagine; by host glycan is linked to asparagine 146. The active-site Proton donor/acceptor is the aspartate 151. Arginine 152 is a binding site for substrate. Residues asparagine 200 and asparagine 234 are each glycosylated (N-linked (GlcNAc...) asparagine; by host). Substrate is bound at residue 276–277 (EE). Position 292 (arginine 292) interacts with substrate. Ca(2+) is bound by residues aspartate 293, glycine 297, and aspartate 324. Substrate is bound at residue arginine 371. Tyrosine 406 acts as the Nucleophile in catalysis.

The protein belongs to the glycosyl hydrolase 34 family. In terms of assembly, homotetramer. Requires Ca(2+) as cofactor. In terms of processing, N-glycosylated.

The protein resides in the virion membrane. It is found in the host apical cell membrane. The catalysed reaction is Hydrolysis of alpha-(2-&gt;3)-, alpha-(2-&gt;6)-, alpha-(2-&gt;8)- glycosidic linkages of terminal sialic acid residues in oligosaccharides, glycoproteins, glycolipids, colominic acid and synthetic substrates.. Inhibited by the neuraminidase inhibitors zanamivir (Relenza) and oseltamivir (Tamiflu). These drugs interfere with the release of progeny virus from infected cells and are effective against all influenza strains. Resistance to neuraminidase inhibitors is quite rare. In terms of biological role, catalyzes the removal of terminal sialic acid residues from viral and cellular glycoconjugates. Cleaves off the terminal sialic acids on the glycosylated HA during virus budding to facilitate virus release. Additionally helps virus spread through the circulation by further removing sialic acids from the cell surface. These cleavages prevent self-aggregation and ensure the efficient spread of the progeny virus from cell to cell. Otherwise, infection would be limited to one round of replication. Described as a receptor-destroying enzyme because it cleaves a terminal sialic acid from the cellular receptors. May facilitate viral invasion of the upper airways by cleaving the sialic acid moieties on the mucin of the airway epithelial cells. Likely to plays a role in the budding process through its association with lipid rafts during intracellular transport. May additionally display a raft-association independent effect on budding. Plays a role in the determination of host range restriction on replication and virulence. Sialidase activity in late endosome/lysosome traffic seems to enhance virus replication. This Aves (whales) protein is Neuraminidase.